Here is a 238-residue protein sequence, read N- to C-terminus: UPF0173 metal-dependent hydrolase Helmi_16730 (238 aa).

The protein belongs to the UPF0173 family.

The sequence is that of UPF0173 metal-dependent hydrolase Helmi_16730 from Heliobacterium modesticaldum (strain ATCC 51547 / Ice1).